A 105-amino-acid polypeptide reads, in one-letter code: Synaptic plasticity regulator PANTS (105 aa).

This sequence belongs to the UPF0545 family. In terms of assembly, interacts with RTN4 isoform A/Nogo-A; the interaction results in enhanced RTN4-mediated inhibition of AMPA receptor clustering. Also interacts with NCAM1, RANBP2 and CCT8. Post-translationally, rapidly degraded by proteolysis following neuronal stimulation, resulting in increased AMPA receptor clustering. In terms of tissue distribution, in the postnatal brain, expressed diffusely throughout the hippocampus at a low level at 8 weeks (at protein level). At 16 weeks, strongly expressed in the stratum lucidum of the hippocampus (at protein level). In developing and aging brain, expression is strongest in hippocampus, especially in areas CA3 and CA2, throughout the dorsoventral axis.

It localises to the synapse. The protein resides in the synaptic cleft. In terms of biological role, negatively regulates long-term potentiation and modulates adult synaptic plasticity. Stabilizes the interaction of RTN4 isoform A/Nogo-A with its receptors, inhibiting clustering of postsynaptic AMPA receptors at synaptic sites. Upon neuronal stimulation, degraded at synapses, reducing RTN4 signaling and allowing AMPA receptor clustering at individual synapses. The sequence is that of Synaptic plasticity regulator PANTS from Mus musculus (Mouse).